A 1083-amino-acid polypeptide reads, in one-letter code: UPF0182 protein BAD_0641 (1083 aa).

A disordered region spans residues 1–72; it reads MSFFDMFGPM…TSKPNRPRKP (72 aa). The next 7 membrane-spanning stretches (helical) occupy residues 78 to 98, 125 to 145, 178 to 198, 239 to 259, 281 to 301, 325 to 345, and 372 to 392; these read IFIGVVLALAIVIGLFFALAQ, LWLAYAVLIAAVGFISATLAI, IAVVISLIVGLVFGSQFNANW, SLLLLAGIIFSIVTHVLMGGI, IGIWLMLNMFAWAANQVLGVF, VTFIMAAITAILGVILGLWIM, and VAIASAIVVSLVLTVAWPVLL. Residues 976-1061 form a disordered region; the sequence is DSGASAGDAE…SDAAMKKGDW (86 aa). Basic and acidic residues-rich tracts occupy residues 991-1013 and 1050-1060; these read TDDKQDAKNDDSADGKTNTDGKQ and KDSDAAMKKGD.

Belongs to the UPF0182 family.

The protein resides in the cell membrane. The chain is UPF0182 protein BAD_0641 from Bifidobacterium adolescentis (strain ATCC 15703 / DSM 20083 / NCTC 11814 / E194a).